Consider the following 489-residue polypeptide: Betaine aldehyde dehydrogenase (489 aa).

N93 contributes to the K(+) binding site. 150-152 (GAW) is an NAD(+) binding site. K162 functions as the Charge relay system in the catalytic mechanism. Residue 176–179 (KPSE) participates in NAD(+) binding. V180 is a K(+) binding site. An NAD(+)-binding site is contributed by 229–232 (EVGT). L245 contacts K(+). E251 acts as the Proton acceptor in catalysis. NAD(+)-binding residues include G253, C285, and E386. Residue C285 is the Nucleophile of the active site. At C285 the chain carries Cysteine sulfenic acid (-SOH). Residues K456 and G459 each contribute to the K(+) site. Residue E463 is the Charge relay system of the active site.

This sequence belongs to the aldehyde dehydrogenase family. In terms of assembly, dimer of dimers. The cofactor is K(+).

The catalysed reaction is betaine aldehyde + NAD(+) + H2O = glycine betaine + NADH + 2 H(+). The protein operates within amine and polyamine biosynthesis; betaine biosynthesis via choline pathway; betaine from betaine aldehyde: step 1/1. Functionally, involved in the biosynthesis of the osmoprotectant glycine betaine. Catalyzes the irreversible oxidation of betaine aldehyde to the corresponding acid. This Chromohalobacter salexigens (strain ATCC BAA-138 / DSM 3043 / CIP 106854 / NCIMB 13768 / 1H11) protein is Betaine aldehyde dehydrogenase.